The primary structure comprises 369 residues: S-(hydroxymethyl)glutathione dehydrogenase (369 aa).

Residues C40, H62, C92, C95, C98, C106, and C169 each contribute to the Zn(2+) site.

This sequence belongs to the zinc-containing alcohol dehydrogenase family. Class-III subfamily. As to quaternary structure, homodimer. The cofactor is Zn(2+).

Its subcellular location is the cytoplasm. The enzyme catalyses S-(hydroxymethyl)glutathione + NADP(+) = S-formylglutathione + NADPH + H(+). It catalyses the reaction S-(hydroxymethyl)glutathione + NAD(+) = S-formylglutathione + NADH + H(+). It carries out the reaction a primary alcohol + NAD(+) = an aldehyde + NADH + H(+). The catalysed reaction is a secondary alcohol + NAD(+) = a ketone + NADH + H(+). The enzyme catalyses S-nitrosoglutathione + NADH + H(+) = S-(hydroxysulfenamide)glutathione + NAD(+). Its function is as follows. Has high formaldehyde dehydrogenase activity in the presence of glutathione and catalyzes the oxidation of normal alcohols in a reaction that is not GSH-dependent. In addition, hemithiolacetals other than those formed from GSH, including omega-thiol fatty acids, also are substrates. Also acts as a S-nitroso-glutathione reductase by catalyzing the NADH-dependent reduction of S-nitrosoglutathione. The protein is S-(hydroxymethyl)glutathione dehydrogenase (frmA) of Escherichia coli O6:H1 (strain CFT073 / ATCC 700928 / UPEC).